The following is a 463-amino-acid chain: MFS-type transporter criB (463 aa).

11 helical membrane-spanning segments follow: residues 5–27 (LVLSCGVIAGISGFLFGYDSGIM), 46–66 (MVGTIVAIMQAGGFFGCLTAG), 83–103 (VFVVVGGALQAAAYHTAMLLI), 106–126 (LVTGFGVGSLTMTVPVYQAEI), 141–161 (LMLAIGSAIANWTGYGCSFVN), 168–188 (MPLALQAVPGIVLFFGSYFLP), 256–276 (LFLGAGIWLMLNLTGINVINY), 293–313 (IFLSGVYGSVGAATTFLALFF), 323–343 (LMMANISQTATLIVMAGLTAA), 355–375 (VAMIFLFFVIYCSTWGPLSWV), and 402–422 (FYFLFVATNFISALVLLFLYP).

The protein belongs to the major facilitator superfamily. Sugar transporter (TC 2.A.1.1) family.

The protein resides in the membrane. MFS-type transporter; part of the gene cluster that mediates the biosynthesis of echinulin family alkaloid. This chain is MFS-type transporter criB, found in Aspergillus cristatus (Chinese Fuzhuan brick tea-fermentation fungus).